The chain runs to 154 residues: 6,7-dimethyl-8-ribityllumazine synthase (154 aa).

5-amino-6-(D-ribitylamino)uracil is bound by residues F21, 55 to 57 (AFE), and 79 to 81 (CVI). Residue 84–85 (AT) participates in (2S)-2-hydroxy-3-oxobutyl phosphate binding. H87 functions as the Proton donor in the catalytic mechanism. 5-amino-6-(D-ribitylamino)uracil is bound at residue F112. R126 provides a ligand contact to (2S)-2-hydroxy-3-oxobutyl phosphate.

The protein belongs to the DMRL synthase family. Forms an icosahedral capsid composed of 60 subunits, arranged as a dodecamer of pentamers.

It catalyses the reaction (2S)-2-hydroxy-3-oxobutyl phosphate + 5-amino-6-(D-ribitylamino)uracil = 6,7-dimethyl-8-(1-D-ribityl)lumazine + phosphate + 2 H2O + H(+). Its pathway is cofactor biosynthesis; riboflavin biosynthesis; riboflavin from 2-hydroxy-3-oxobutyl phosphate and 5-amino-6-(D-ribitylamino)uracil: step 1/2. Its function is as follows. Catalyzes the formation of 6,7-dimethyl-8-ribityllumazine by condensation of 5-amino-6-(D-ribitylamino)uracil with 3,4-dihydroxy-2-butanone 4-phosphate. This is the penultimate step in the biosynthesis of riboflavin. The polypeptide is 6,7-dimethyl-8-ribityllumazine synthase (Staphylococcus aureus (strain MRSA252)).